A 612-amino-acid chain; its full sequence is Dihydroxy-acid dehydratase (612 aa).

Asp-81 is a Mg(2+) binding site. Cys-122 contributes to the [2Fe-2S] cluster binding site. Mg(2+)-binding residues include Asp-123 and Lys-124. The residue at position 124 (Lys-124) is an N6-carboxylysine. [2Fe-2S] cluster is bound at residue Cys-196. Glu-492 contacts Mg(2+). The active-site Proton acceptor is the Ser-518.

It belongs to the IlvD/Edd family. In terms of assembly, homodimer. [2Fe-2S] cluster is required as a cofactor. The cofactor is Mg(2+).

The enzyme catalyses (2R)-2,3-dihydroxy-3-methylbutanoate = 3-methyl-2-oxobutanoate + H2O. It catalyses the reaction (2R,3R)-2,3-dihydroxy-3-methylpentanoate = (S)-3-methyl-2-oxopentanoate + H2O. It functions in the pathway amino-acid biosynthesis; L-isoleucine biosynthesis; L-isoleucine from 2-oxobutanoate: step 3/4. The protein operates within amino-acid biosynthesis; L-valine biosynthesis; L-valine from pyruvate: step 3/4. Functions in the biosynthesis of branched-chain amino acids. Catalyzes the dehydration of (2R,3R)-2,3-dihydroxy-3-methylpentanoate (2,3-dihydroxy-3-methylvalerate) into 2-oxo-3-methylpentanoate (2-oxo-3-methylvalerate) and of (2R)-2,3-dihydroxy-3-methylbutanoate (2,3-dihydroxyisovalerate) into 2-oxo-3-methylbutanoate (2-oxoisovalerate), the penultimate precursor to L-isoleucine and L-valine, respectively. The protein is Dihydroxy-acid dehydratase of Cereibacter sphaeroides (strain ATCC 17029 / ATH 2.4.9) (Rhodobacter sphaeroides).